A 618-amino-acid polypeptide reads, in one-letter code: 1-deoxy-D-xylulose-5-phosphate synthase (618 aa).

Residues histidine 76 and 117-119 (GHS) contribute to the thiamine diphosphate site. Aspartate 148 contacts Mg(2+). Thiamine diphosphate-binding positions include 149–150 (GA), asparagine 177, tyrosine 284, and glutamate 366. Asparagine 177 provides a ligand contact to Mg(2+).

The protein belongs to the transketolase family. DXPS subfamily. In terms of assembly, homodimer. Mg(2+) serves as cofactor. Thiamine diphosphate is required as a cofactor.

It catalyses the reaction D-glyceraldehyde 3-phosphate + pyruvate + H(+) = 1-deoxy-D-xylulose 5-phosphate + CO2. It participates in metabolic intermediate biosynthesis; 1-deoxy-D-xylulose 5-phosphate biosynthesis; 1-deoxy-D-xylulose 5-phosphate from D-glyceraldehyde 3-phosphate and pyruvate: step 1/1. In terms of biological role, catalyzes the acyloin condensation reaction between C atoms 2 and 3 of pyruvate and glyceraldehyde 3-phosphate to yield 1-deoxy-D-xylulose-5-phosphate (DXP). The chain is 1-deoxy-D-xylulose-5-phosphate synthase from Dechloromonas aromatica (strain RCB).